The chain runs to 397 residues: S-adenosylmethionine synthase (397 aa).

ATP is bound at residue histidine 17. Residue aspartate 19 coordinates Mg(2+). Glutamate 45 provides a ligand contact to K(+). Residues glutamate 58 and glutamine 101 each contribute to the L-methionine site. The segment at 101–111 is flexible loop; sequence QSPDIAQGVDK. Residues 176-178, 243-244, aspartate 252, 258-259, and lysine 279 each bind ATP; these read DGK, RF, and RK. Aspartate 252 lines the L-methionine pocket. Lysine 283 serves as a coordination point for L-methionine.

Belongs to the AdoMet synthase family. Homotetramer; dimer of dimers. It depends on Mg(2+) as a cofactor. Requires K(+) as cofactor.

The protein localises to the cytoplasm. The catalysed reaction is L-methionine + ATP + H2O = S-adenosyl-L-methionine + phosphate + diphosphate. It functions in the pathway amino-acid biosynthesis; S-adenosyl-L-methionine biosynthesis; S-adenosyl-L-methionine from L-methionine: step 1/1. Functionally, catalyzes the formation of S-adenosylmethionine (AdoMet) from methionine and ATP. The overall synthetic reaction is composed of two sequential steps, AdoMet formation and the subsequent tripolyphosphate hydrolysis which occurs prior to release of AdoMet from the enzyme. The protein is S-adenosylmethionine synthase of Staphylococcus aureus (strain USA300).